The following is a 798-amino-acid chain: Heterogeneous nuclear ribonucleoprotein U (798 aa).

The residue at position 2 (Ser-2) is an N-acetylserine. Position 4 is a phosphoserine (Ser-4). In terms of domain architecture, SAP spans 8–42; that stretch reads VKKLKVSELKEELKKRRLSDKGLKADLMDRLQAAL. 2 positions are modified to N6-acetyllysine: Lys-17 and Lys-21. Residues 41–229 are disordered; it reads ALDNEAGGRP…VKRPREDHGR (189 aa). The residue at position 58 (Ser-58) is a Phosphoserine. Composition is skewed to low complexity over residues 71–80 and 103–113; these read AGLEQEAAAG and ENGAAGAADAG. Acidic residues-rich tracts occupy residues 114–128 and 134–147; these read AMEE…ENGD and EGED…EGAG. Residues 153-169 show a composition bias toward low complexity; it reads GEQQSQPPAAAQQASQQ. Lys-179 is modified (N6-acetyllysine). Ser-180 is modified (ADP-ribosylserine). Over residues 192 to 203 the composition is skewed to low complexity; the sequence is APPGARQGQQQA. Residues 207-229 are compositionally biased toward basic and acidic residues; it reads GKTEQKAGDKKRGVKRPREDHGR. Residue Arg-229 is modified to Citrulline. The residue at position 239 (Lys-239) is an N6-acetyllysine; alternate. Lys-239 is covalently cross-linked (Glycyl lysine isopeptide (Lys-Gly) (interchain with G-Cter in SUMO1); alternate). Residue Lys-239 forms a Glycyl lysine isopeptide (Lys-Gly) (interchain with G-Cter in SUMO2); alternate linkage. At Tyr-240 the chain carries Phosphotyrosine. Residues Ser-241 and Ser-245 each carry the phosphoserine modification. The B30.2/SPRY domain maps to 242–438; that stretch reads RAKSPQPPVE…VEFNFGQKEK (197 aa). At Thr-260 the chain carries Phosphothreonine. Residue Lys-326 is modified to N6-acetyllysine. Residues 462–646 are ATPase domain; sequence PKGPEEKKDC…QKLLEQYKEE (185 aa). Residue Lys-469 forms a Glycyl lysine isopeptide (Lys-Gly) (interchain with G-Cter in SUMO2) linkage. 478–485 serves as a coordination point for ATP; the sequence is GLPGAGKT. 2 positions are modified to N6-acetyllysine; alternate: Lys-490 and Lys-498. Residues Lys-490 and Lys-498 each participate in a glycyl lysine isopeptide (Lys-Gly) (interchain with G-Cter in SUMO2); alternate cross-link. Residue Thr-506 is modified to Phosphothreonine. Residue Lys-510 forms a Glycyl lysine isopeptide (Lys-Gly) (interchain with G-Cter in SUMO2) linkage. Lys-525 carries the N6-acetyllysine modification. The residue at position 539 (Lys-539) is an N6-acetyllysine; alternate. Residue Lys-539 forms a Glycyl lysine isopeptide (Lys-Gly) (interchain with G-Cter in SUMO2); alternate linkage. A Glycyl lysine isopeptide (Lys-Gly) (interchain with G-Cter in SUMO2) cross-link involves residue Lys-548. Residue Thr-556 is modified to Phosphothreonine. Residues Lys-583 and Lys-600 each participate in a glycyl lysine isopeptide (Lys-Gly) (interchain with G-Cter in SUMO2) cross-link. Residues 585–600 form an actin-binding region; that stretch reads EDYKQRTQKKAEVEGK. Lys-609 carries the post-translational modification N6-acetyllysine; alternate. A Glycyl lysine isopeptide (Lys-Gly) (interchain with G-Cter in SUMO2); alternate cross-link involves residue Lys-609. A coiled-coil region spans residues 624 to 651; that stretch reads DEITYVELQKEEAQKLLEQYKEESKKAL. Glycyl lysine isopeptide (Lys-Gly) (interchain with G-Cter in SUMO2) cross-links involve residues Lys-638 and Lys-644. A compositionally biased stretch (basic and acidic residues) spans 645–657; it reads EESKKALPPEKKQ. The tract at residues 645 to 727 is disordered; sequence EESKKALPPE…GSGGIGYPYP (83 aa). The residue at position 676 (Arg-676) is an Omega-N-methylarginine. Residues 684 to 702 are compositionally biased toward gly residues; that stretch reads GGFNMRGGNFRGGAPGNRG. The tract at residues 688 to 713 is RNA-binding RGG-box; that stretch reads MRGGNFRGGAPGNRGGYNRRGNMPQR. An asymmetric dimethylarginine mark is found at Arg-689, Arg-694, and Arg-701. Asymmetric dimethylarginine; alternate occurs at positions 707 and 713. Residues Arg-707 and Arg-713 each carry the omega-N-methylarginine; alternate modification. Gly residues predominate over residues 713–723; sequence RGGGGGSGGIG. Asymmetric dimethylarginine is present on residues Arg-728 and Arg-735. The segment at 743-772 is disordered; the sequence is NYNRGGMPNRGNYNQNFRGRGNNRGYKNQS. An N6-acetyllysine; alternate modification is found at Lys-787. Lys-787 participates in a covalent cross-link: Glycyl lysine isopeptide (Lys-Gly) (interchain with G-Cter in SUMO2); alternate.

As to quaternary structure, oligomer (via ATPase domain and RNA-binding RGG-box region); oligomerization occurs upon ATP-binding in a chromatin-associated RNAs (caRNAs)- and transcription-dependent manner and is required for chromatin decompaction. ATP hydrolysis is required to cycle from an oligomeric to monomeric state to compact chromatin. Component of the coding region determinant (CRD)-mediated complex, composed of DHX9, HNRNPU, IGF2BP1, SYNCRIP and YBX1. Identified in the spliceosome C complex. Identified in a IGF2BP1-dependent mRNP granule complex containing untranslated mRNAs. Associates with heterogeneous nuclear ribonucleoprotein (hnRNP) particles. Associates (via middle region) with the C-terminal domain (CTD) RNA polymerase II (Pol II) holoenzyme; this association occurs in a RNA-independent manner. Associates (via middle region) with the core-TFIIH basal transcription factor complex; this association inhibits the CTD phosphorylation of RNA polymerase II holoenzyme by down-regulating TFIIH kinase activity. Associates with the telomerase holoenzyme complex. Associates with spindle microtubules (MTs) in a TPX2-dependent manner. Interacts (via C-terminus) with actin; this interaction is direct and mediates association with the phosphorylated CTD of RNA polymerase II and is disrupted in presence of the long non-coding H19 RNA. Interacts with AURKA. Interacts (via C-terminus) with CBX5; this interaction is, at least in part, RNA-dependent. Interacts with CR2. Interacts with CRY1. Interacts (via C-terminus) with EP300; this interaction enhances DNA-binding to nuclear scaffold/matrix attachment region (S/MAR) elements. Interacts with ERBB4. Interacts with GEMIN5. Interacts with IGF2BP1. Interacts with IGF2BP2 and IGF2BP3. Interacts with NCL; this interaction occurs during mitosis. Interacts (via C-terminus) with NR3C1 (via C-terminus). Interacts with PLK1; this interaction induces phosphorylation of HNRNPU at Ser-58 in mitosis. Interacts with POU3F4. Interacts with SMARCA4; this interaction occurs in embryonic stem cells and stimulates global Pol II-mediated transcription. Interacts (via C-terminus) with TOP2A; this interaction protects the topoisomerase TOP2A from degradation and positively regulates the relaxation of supercoiled DNA by TOP2A in a RNA-dependent manner. Interacts with TPX2; this interaction recruits HNRNPU to spindle microtubules (MTs). Interacts with UBQLN2. Interacts (via RNA-binding RGG-box region) with ZBTB7B; the interaction facilitates the recruitment of long non-coding RNA Blnc1 by ZBTB7B. Interacts with ERCC6. Post-translationally, cleaved at Asp-94 by CASP3 during T-cell apoptosis, resulting in a loss of DNA- and chromatin-binding activities. Extensively phosphorylated. Phosphorylated on Ser-58 by PLK1 and dephosphorylated by protein phosphatase 2A (PP2A) in mitosis. In terms of processing, arg-707 and Arg-713 are dimethylated, probably to asymmetric dimethylarginine. Post-translationally, citrullinated by PADI4.

It localises to the nucleus. Its subcellular location is the nucleus matrix. The protein resides in the chromosome. The protein localises to the nucleus speckle. It is found in the cytoplasm. It localises to the cytoskeleton. Its subcellular location is the microtubule organizing center. The protein resides in the centrosome. The protein localises to the centromere. It is found in the kinetochore. It localises to the spindle. Its subcellular location is the spindle pole. The protein resides in the midbody. The protein localises to the cell surface. It is found in the cytoplasmic granule. Functionally, DNA- and RNA-binding protein involved in several cellular processes such as nuclear chromatin organization, telomere-length regulation, transcription, mRNA alternative splicing and stability, Xist-mediated transcriptional silencing and mitotic cell progression. Plays a role in the regulation of interphase large-scale gene-rich chromatin organization through chromatin-associated RNAs (caRNAs) in a transcription-dependent manner, and thereby maintains genomic stability. Required for the localization of the long non-coding Xist RNA on the inactive chromosome X (Xi) and the subsequent initiation and maintenance of X-linked transcriptional gene silencing during X-inactivation. Required for the topoisomerase TOP2A protein stability and activity in a RNA-dependent manner. Plays a role as a RNA polymerase II (Pol II) holoenzyme transcription regulator. Promotes transcription initiation by direct association with the core-TFIIH basal transcription factor complex for the assembly of a functional pre-initiation complex with Pol II in a actin-dependent manner. Blocks Pol II transcription elongation activity by inhibiting the C-terminal domain (CTD) phosphorylation of Pol II and dissociates from Pol II pre-initiation complex prior to productive transcription elongation. Positively regulates CBX5-induced transcriptional gene silencing and retention of CBX5 in the nucleus. Negatively regulates glucocorticoid-mediated transcriptional activation. Key regulator of transcription initiation and elongation in embryonic stem cells upon leukemia inhibitory factor (LIF) signaling. Involved in the long non-coding RNA H19-mediated Pol II transcriptional repression. Participates in the circadian regulation of the core clock component BMAL1 transcription. Plays a role in the regulation of telomere length. Plays a role as a global pre-mRNA alternative splicing modulator by regulating U2 small nuclear ribonucleoprotein (snRNP) biogenesis. Plays a role in mRNA stability. Component of the CRD-mediated complex that promotes MYC mRNA stabilization. Enhances the expression of specific genes, such as tumor necrosis factor TNFA, by regulating mRNA stability, possibly through binding to the 3'-untranslated region (UTR). Plays a role in mitotic cell cycle regulation. Involved in the formation of stable mitotic spindle microtubules (MTs) attachment to kinetochore, spindle organization and chromosome congression. Phosphorylation at Ser-58 by PLK1 is required for chromosome alignement and segregation and progression through mitosis. Also contributes to the targeting of AURKA to mitotic spindle MTs. Binds to double- and single-stranded DNA and RNA, poly(A), poly(C) and poly(G) oligoribonucleotides. Binds to chromatin-associated RNAs (caRNAs). Associates with chromatin to scaffold/matrix attachment region (S/MAR) elements in DNA. Associates with chromatin in a chromatin-associated RNAs (caRNAs)-dependent manner. Binds to the Xist RNA. Binds the long non-coding H19 RNA. Binds to SMN1/2 pre-mRNAs at G/U-rich regions. Binds to small nuclear RNAs (snRNAs). Binds to the 3'-UTR of TNFA mRNA. Binds (via RNA-binding RGG-box region) to the long non-coding Xist RNA; this binding is direct and bridges the Xist RNA and the inactive chromosome X (Xi). Also negatively regulates embryonic stem cell differentiation upon LIF signaling. Required for embryonic development. Binds to brown fat long non-coding RNA 1 (Blnc1); facilitates the recruitment of Blnc1 by ZBTB7B required to drive brown and beige fat development and thermogenesis. The chain is Heterogeneous nuclear ribonucleoprotein U from Rattus norvegicus (Rat).